The sequence spans 220 residues: Adenylate kinase (220 aa).

Position 10–15 (10–15 (GAGKGT)) interacts with ATP. Residues 30–59 (STGDMLRAAVKAGSPLGVEAKGYMDAGKLV) are NMP. Residues T31, R36, 57 to 59 (KLV), 85 to 88 (GFPR), and Q92 contribute to the AMP site. Residues 122–159 (GRRTHPASGRTYHVKFNPPKVEGKDDVTGEPLIQRDDD) form an LID region. Residues R123 and 132–133 (TY) each bind ATP. R156 and R167 together coordinate AMP. Residue G206 participates in ATP binding.

This sequence belongs to the adenylate kinase family. In terms of assembly, monomer.

The protein localises to the cytoplasm. It catalyses the reaction AMP + ATP = 2 ADP. It participates in purine metabolism; AMP biosynthesis via salvage pathway; AMP from ADP: step 1/1. Catalyzes the reversible transfer of the terminal phosphate group between ATP and AMP. Plays an important role in cellular energy homeostasis and in adenine nucleotide metabolism. The protein is Adenylate kinase of Burkholderia ambifaria (strain ATCC BAA-244 / DSM 16087 / CCUG 44356 / LMG 19182 / AMMD) (Burkholderia cepacia (strain AMMD)).